The sequence spans 184 residues: Photosystem I assembly protein Ycf4 (184 aa).

The next 2 helical transmembrane spans lie at 22–42 (FCWAFILFLGSLGFLLVGTSS) and 57–77 (IIFFPQGIVMSFYGIAGLFIS).

This sequence belongs to the Ycf4 family.

Its subcellular location is the plastid. The protein localises to the chloroplast thylakoid membrane. Functionally, seems to be required for the assembly of the photosystem I complex. The chain is Photosystem I assembly protein Ycf4 from Crucihimalaya wallichii (Rock-cress).